Reading from the N-terminus, the 1581-residue chain is MVDAGGRCAAEGWRRMEAPPEGADLVPLDRYDAARAKIAANLQWICAKAYGLDNIPEDLRDPFYIDQYEQEHIKPPVIKLLLSSELYCRVCSLILKGDQVATLQGHQSVIQALSRKGIYVMESDDTPVTDADLSQAPIKMSGHMAMVDALMMAYTVEMISIEKVVASVKRFSTFSASKELPYDLEDAMVFWINKVNLKMREITEKEVKLKQQPLESPAHQKVRYRREHLSARQSPYFPLLEDLMRDGSDGAALLAVVHYYCPEQMKLDDICLKEVPSMADSLYNIRLLREFSNEHLNKCFYLTLEDMLYAPLVLKPNVMVFIAELFWWFENVKPDFVQPRDIQELKDAKTVLQQKSSRPPVPISNATKRSFLGSPAAMSPADQPPSTQPLAEGSHRYHLHSEEPECLGKGASTFSPSHPLLPLRQKQQKVSQTEEIPDQRHRSNSLTRVDGQPRGAIGAWPDKKNRPVSQPTSFALHHAASCDVDPSSGDSVSLARSISKDSLASNIIHLTPQNQPHPSAGKSNGKSLLSNVNIEDEDEELVAIIRTDVSPPSPQMPRTSPQAPGLVASIRSPQRQADTLESKPDSFYLEPLMPAVLRPAKEKQITTKEDERGEGRPRTIMAKRPSEGSQPMVRKKVSGGHGSRDLNRTFTPIPCSEFAASIDLAEVGPQSAEATGEGQPLALGRFDTLPQGQAADGFFLHVGRAEEDEGRWYVGSQSPSSHDSEPWTILRQDSDSDVVDVEDTEQDFIGEDHPVVIPRYAGEEESAKLQEDMKVKEHEDKDDASGRSSPCLSTTSQLSSMSMASGSVKMTSFAERKLQRLNSCETKSSTSSSQKTTPDASESCPAPLTTWRQKREQSPGRHSKDPASLLASELVQLHMQLEEKRRAIEAQKKKMEALSARQRLKLGKAAFLHVVKKGKADGAPQPLRPEHFTKEFTQHNGEDLDDGTCKTEGFLVKEEQRDLSDAQDVAFVQLHKPRDPAALHDGEKHRMISTALLEDSVGEVDVNECDLSIEKLNETISTLQQAILKISQQQEQLLMKSPTVPTPGTKNNCQDQKIKAPVHFVEPLSPTGVPGHRKPPRLGQGRNSRSGRPAELKVPKDRQQGCSRSKTPTPSVETLPQSRSLPPSTHPRSPSDPGGELPEKCLFDSYRLHDESNHRTFVLSSCKDANIVSEQVNFKEGLDTSVKEAGLSSSTITGKEHTPVEEPLRSKASLIEVDLSDLKAPDEDGEVVGHESSVELGGDSDQKPGVGFFFKDEQKAEDELAKKRAAFLLKQQRKAEEARARKQQLEAEVELKRDEARRKAEEDRLRKEEEKARRELIKQEYLRRKQQQALEEQGLGKPKSKPKKPRPKSVHREESYSDSGTKCSSTHNLSQTHSGSSLSLASAATTEPESVYSGGTPSHRVESLEALPILSRNPSRSTDRDWETASAASSLASVAEYTGPKLFKEPSSKSNKPIIHNAISHCCLAGKVNEPHKNSILELEKCDANHYIILFRDAGCQFRALYCYQPDTEEIYKLTGTGPKSITKKMIDKLYKYSSDRKQFNLIPAKTMSVSVDALTIHNHLWQPKRPTVPKKTQTRK.

In terms of domain architecture, Calponin-homology (CH) spans 215 to 330 (ESPAHQKVRY…FIAELFWWFE (116 aa)). Phosphoserine is present on residues S216, S370, S374, and S415. A disordered region spans residues 351-399 (VLQQKSSRPPVPISNATKRSFLGSPAAMSPADQPPSTQPLAEGSHRYHL). The interval 424–470 (RQKQQKVSQTEEIPDQRHRSNSLTRVDGQPRGAIGAWPDKKNRPVSQ) is disordered. T511 is subject to Phosphothreonine. A phosphoserine mark is found at S550, S553, S560, S572, and S586. Residues 603–617 (KQITTKEDERGEGRP) show a composition bias toward basic and acidic residues. Residues 603–649 (KQITTKEDERGEGRPRTIMAKRPSEGSQPMVRKKVSGGHGSRDLNRT) form a disordered region. A phosphoserine mark is found at S626, S718, S724, S734, and S736. The span at 765–785 (ESAKLQEDMKVKEHEDKDDAS) shows a compositional bias: basic and acidic residues. 2 disordered regions span residues 765 to 803 (ESAK…SMSM) and 821 to 866 (LNSC…SKDP). Composition is skewed to low complexity over residues 792–803 (LSTTSQLSSMSM) and 826–837 (TKSSTSSSQKTT). Residues 853 to 865 (QKREQSPGRHSKD) are compositionally biased toward basic and acidic residues. Residues 867–888 (ASLLASELVQLHMQLEEKRRAI) form a sufficient for interaction with SPTBN1 region. Coiled coils occupy residues 869–905 (LLAS…QRLK) and 1005–1037 (DVNE…QEQL). The sufficient for interaction with calmodulin stretch occupies residues 899–918 (SARQRLKLGKAAFLHVVKKG). Disordered stretches follow at residues 1064–1143 (FVEP…ELPE), 1225–1251 (PDED…PGVG), 1288–1315 (QLEA…EEEK), and 1332–1428 (QALE…DWET). S1069 is subject to Phosphoserine. Basic and acidic residues predominate over residues 1092-1103 (RPAELKVPKDRQ). Positions 1104 to 1132 (QGCSRSKTPTPSVETLPQSRSLPPSTHPR) are enriched in polar residues. S1133 carries the phosphoserine modification. Residues 1225–1237 (PDEDGEVVGHESS) are compositionally biased toward basic and acidic residues. A coiled-coil region spans residues 1265-1336 (AKKRAAFLLK…RRKQQQALEE (72 aa)). Positions 1342 to 1353 (PKSKPKKPRPKS) are enriched in basic residues. The span at 1361 to 1372 (SDSGTKCSSTHN) shows a compositional bias: polar residues. Positions 1373-1390 (LSQTHSGSSLSLASAATT) are enriched in low complexity. Phosphoserine occurs at positions 1378 and 1407. Residues 1443-1576 (GPKLFKEPSS…QPKRPTVPKK (134 aa)) enclose the CKK domain. Phosphotyrosine is present on Y1516.

The protein belongs to the CAMSAP1 family. As to quaternary structure, interacts with spectrin via SPTBN1; the interaction is direct. Interacts with calmodulin; calcium-dependent it prevents interaction with spectrin. In terms of tissue distribution, expressed in the central nervous system.

It localises to the cytoplasm. The protein localises to the cytoskeleton. Its function is as follows. Key microtubule-organizing protein that specifically binds the minus-end of non-centrosomal microtubules and regulates their dynamics and organization. Specifically recognizes growing microtubule minus-ends and stabilizes microtubules. Acts on free microtubule minus-ends that are not capped by microtubule-nucleating proteins or other factors and protects microtubule minus-ends from depolymerization. In contrast to CAMSAP2 and CAMSAP3, tracks along the growing tips of minus-end microtubules without significantly affecting the polymerization rate: binds at the very tip of the microtubules minus-end and acts as a minus-end tracking protein (-TIP) that dissociates from microtubules after allowing tubulin incorporation. Through interaction with spectrin may regulate neurite outgrowth. In Mus musculus (Mouse), this protein is Calmodulin-regulated spectrin-associated protein 1 (Camsap1).